We begin with the raw amino-acid sequence, 507 residues long: Cystathionine beta-synthase (507 aa).

The residue at position 53 (Lys53) is an N6-(pyridoxal phosphate)lysine. Asn84 contacts pyridoxal 5'-phosphate. A Phosphoserine modification is found at Ser134. Pyridoxal 5'-phosphate-binding positions include 196–200 and Ser289; that span reads GTGGT. Residues Ser350 and Ser424 each carry the phosphoserine modification. The region spanning 373–432 is the CBS domain; it reads HLKPVVSVKETAKVTDVIKILKDNGFDQLPVLTEDGKLSGLVTLSELLRKLSINNSNNDN.

This sequence belongs to the cysteine synthase/cystathionine beta-synthase family. Pyridoxal 5'-phosphate is required as a cofactor.

It carries out the reaction L-homocysteine + L-serine = L,L-cystathionine + H2O. It functions in the pathway amino-acid biosynthesis; L-cysteine biosynthesis; L-cysteine from L-homocysteine and L-serine: step 1/2. The protein is Cystathionine beta-synthase (CYS4) of Saccharomyces cerevisiae (strain ATCC 204508 / S288c) (Baker's yeast).